The primary structure comprises 202 residues: Imidazole glycerol phosphate synthase subunit HisH (202 aa).

The Glutamine amidotransferase type-1 domain occupies 3 to 202 (RIVIIDYGLG…KILKNFVEMC (200 aa)). Catalysis depends on Cys79, which acts as the Nucleophile. Residues His183 and Glu185 contribute to the active site.

As to quaternary structure, heterodimer of HisH and HisF.

The protein localises to the cytoplasm. The enzyme catalyses 5-[(5-phospho-1-deoxy-D-ribulos-1-ylimino)methylamino]-1-(5-phospho-beta-D-ribosyl)imidazole-4-carboxamide + L-glutamine = D-erythro-1-(imidazol-4-yl)glycerol 3-phosphate + 5-amino-1-(5-phospho-beta-D-ribosyl)imidazole-4-carboxamide + L-glutamate + H(+). The catalysed reaction is L-glutamine + H2O = L-glutamate + NH4(+). The protein operates within amino-acid biosynthesis; L-histidine biosynthesis; L-histidine from 5-phospho-alpha-D-ribose 1-diphosphate: step 5/9. In terms of biological role, IGPS catalyzes the conversion of PRFAR and glutamine to IGP, AICAR and glutamate. The HisH subunit catalyzes the hydrolysis of glutamine to glutamate and ammonia as part of the synthesis of IGP and AICAR. The resulting ammonia molecule is channeled to the active site of HisF. The chain is Imidazole glycerol phosphate synthase subunit HisH from Methanosarcina acetivorans (strain ATCC 35395 / DSM 2834 / JCM 12185 / C2A).